A 440-amino-acid chain; its full sequence is Probable exopolygalacturonase C (440 aa).

Positions methionine 1 to glycine 21 are cleaved as a signal peptide. Residues asparagine 84 and asparagine 151 are each glycosylated (N-linked (GlcNAc...) asparagine). 3 PbH1 repeats span residues glycine 188–threonine 210, glycine 217–threonine 238, and serine 240–serine 261. An N-linked (GlcNAc...) asparagine glycan is attached at asparagine 219. Aspartate 231 functions as the Proton donor in the catalytic mechanism. Residue histidine 255 is part of the active site. Asparagine 271 carries an N-linked (GlcNAc...) asparagine glycan. The stretch at isoleucine 272–serine 293 is one PbH1 4 repeat. Residue asparagine 313 is glycosylated (N-linked (GlcNAc...) asparagine). A disulfide bond links cysteine 389 and cysteine 395. Asparagine 434 carries N-linked (GlcNAc...) asparagine glycosylation.

This sequence belongs to the glycosyl hydrolase 28 family.

The protein resides in the secreted. It catalyses the reaction [(1-&gt;4)-alpha-D-galacturonosyl](n) + H2O = alpha-D-galacturonate + [(1-&gt;4)-alpha-D-galacturonosyl](n-1). Specific in hydrolyzing the terminal glycosidic bond of polygalacturonic acid and oligogalacturonates. The sequence is that of Probable exopolygalacturonase C (pgxC) from Aspergillus fumigatus (strain CBS 144.89 / FGSC A1163 / CEA10) (Neosartorya fumigata).